Here is a 124-residue protein sequence, read N- to C-terminus: uncharacterized protein (124 aa).

This is an uncharacterized protein from Haemophilus influenzae (strain ATCC 51907 / DSM 11121 / KW20 / Rd).